Here is a 1109-residue protein sequence, read N- to C-terminus: Ankyrin repeat- and BTB/POZ domain-containing protein 3 (1109 aa).

A helical transmembrane segment spans residues 168-188 (IVLSWGLAAHCTAAALAALSL). Residues 260 to 302 (SCSGPGPGSSSGSGPGPGSGPGAPAADKERETPGGGAASGGPC) are disordered. Residues 264–280 (PGPGSSSGSGPGPGSGP) are compositionally biased toward gly residues. ANK repeat units follow at residues 608–637 (QGMTPLMYACVRGDEAMVQMLLDAGADLNV), 654–683 (RHWTALTFAVLHGHIPVVQLLLDAGAKVEG), 692–721 (YSETPLQLAAAVGNFELVSLLLERGADPLI), 735–764 (GDMNSFSQAAAHGHRNVFRKLLAQPEKEKS), and 830–859 (TWLESLRIAFQQHRRPLIQCLLKEFKTIQE). Residues 928 to 994 (SDVTFLVEGR…LYYGGPESLL (67 aa)) form the BTB domain.

Its subcellular location is the membrane. The chain is Ankyrin repeat- and BTB/POZ domain-containing protein 3 (Abtb3) from Mus musculus (Mouse).